A 475-amino-acid chain; its full sequence is Sulfate adenylyltransferase subunit 1 (475 aa).

The region spanning 25–239 (KSLLRFLTCG…EVLETVEIQR (215 aa)) is the tr-type G domain. The segment at 34 to 41 (GSVDDGKS) is G1. 34 to 41 (GSVDDGKS) contributes to the GTP binding site. Residues 92 to 96 (GITID) form a G2 region. The G3 stretch occupies residues 113 to 116 (DTPG). GTP is bound by residues 113-117 (DTPGH) and 168-171 (NKMD). The tract at residues 168 to 171 (NKMD) is G4. Residues 206–208 (SAL) are G5.

The protein belongs to the TRAFAC class translation factor GTPase superfamily. Classic translation factor GTPase family. CysN/NodQ subfamily. In terms of assembly, heterodimer composed of CysD, the smaller subunit, and CysN.

The enzyme catalyses sulfate + ATP + H(+) = adenosine 5'-phosphosulfate + diphosphate. It functions in the pathway sulfur metabolism; hydrogen sulfide biosynthesis; sulfite from sulfate: step 1/3. Functionally, with CysD forms the ATP sulfurylase (ATPS) that catalyzes the adenylation of sulfate producing adenosine 5'-phosphosulfate (APS) and diphosphate, the first enzymatic step in sulfur assimilation pathway. APS synthesis involves the formation of a high-energy phosphoric-sulfuric acid anhydride bond driven by GTP hydrolysis by CysN coupled to ATP hydrolysis by CysD. In Shigella dysenteriae serotype 1 (strain Sd197), this protein is Sulfate adenylyltransferase subunit 1.